Consider the following 43-residue polypeptide: Protein PsbN (43 aa).

A helical membrane pass occupies residues 7–27 (VAIFISCLLVSFTGYALYTAF).

This sequence belongs to the PsbN family.

Its subcellular location is the plastid. It localises to the chloroplast thylakoid membrane. May play a role in photosystem I and II biogenesis. The protein is Protein PsbN of Huperzia lucidula (Shining clubmoss).